The chain runs to 418 residues: Lariat debranching enzyme (418 aa).

4 residues coordinate a divalent metal cation: Cys-8, His-10, Asp-39, and Asn-84. A lariat recognition loop region spans residues 124-154 (SGIYNERHYRSGHFERPPYNESTIRSVYHVR). A divalent metal cation contacts are provided by His-174, His-226, and His-228. Residues 372–418 (GERTDIPASLAPSDLPTYDSEEIPIDDIDEIEEMEEAKADDHTRDDA) form a disordered region. The span at 390–406 (DSEEIPIDDIDEIEEME) shows a compositional bias: acidic residues. Residues 407–418 (EAKADDHTRDDA) show a composition bias toward basic and acidic residues.

Belongs to the lariat debranching enzyme family. Requires Fe(2+) as cofactor. It depends on Zn(2+) as a cofactor. Mn(2+) serves as cofactor. As to expression, widely expressed. Expressed in roots, stems, cauline and rosette leaves, flower buds and siliques.

The protein localises to the nucleus. Its activity is regulated as follows. Active in presence of diverse metals including Fe(2+), Zn(2+), Mn(2+). Binds two metal cations in two adjacent alpha and beta metal-binding pockets. In terms of biological role, cleaves the 2'-5' phosphodiester linkage at the branch point of lariat intron pre-mRNAs after splicing and converts them into linear molecules that are subsequently degraded. It thereby facilitates ribonucleotide turnover. It may also participate in retrovirus replication via an RNA lariat intermediate in cDNA synthesis. Plays en essential role during embryogenesis. This is Lariat debranching enzyme (DBR1) from Arabidopsis thaliana (Mouse-ear cress).